The chain runs to 130 residues: Small ribosomal subunit protein uS8 (130 aa).

Belongs to the universal ribosomal protein uS8 family. As to quaternary structure, part of the 30S ribosomal subunit.

Its function is as follows. One of the primary rRNA binding proteins, it binds directly to 16S rRNA central domain where it helps coordinate assembly of the platform of the 30S subunit. This is Small ribosomal subunit protein uS8 from Pyrococcus furiosus (strain ATCC 43587 / DSM 3638 / JCM 8422 / Vc1).